The following is a 673-amino-acid chain: UvrABC system protein B (673 aa).

A Helicase ATP-binding domain is found at 26–183 (EGLEDGLAHQ…RRLAELQYAR (158 aa)). 39–46 (GVTGSGKT) contributes to the ATP binding site. The short motif at 92 to 115 (YYDYYQPEAYVPSSDTFIEKDASV) is the Beta-hairpin element. In terms of domain architecture, Helicase C-terminal spans 431 to 597 (QVDDLLSEIR…GLNKKVVDIL (167 aa)). The region spanning 633–668 (QQKIHELEGLMMQHAQNLEFEEAAQVRDQLHQLRQL) is the UVR domain.

Belongs to the UvrB family. Forms a heterotetramer with UvrA during the search for lesions. Interacts with UvrC in an incision complex.

Its subcellular location is the cytoplasm. In terms of biological role, the UvrABC repair system catalyzes the recognition and processing of DNA lesions. A damage recognition complex composed of 2 UvrA and 2 UvrB subunits scans DNA for abnormalities. Upon binding of the UvrA(2)B(2) complex to a putative damaged site, the DNA wraps around one UvrB monomer. DNA wrap is dependent on ATP binding by UvrB and probably causes local melting of the DNA helix, facilitating insertion of UvrB beta-hairpin between the DNA strands. Then UvrB probes one DNA strand for the presence of a lesion. If a lesion is found the UvrA subunits dissociate and the UvrB-DNA preincision complex is formed. This complex is subsequently bound by UvrC and the second UvrB is released. If no lesion is found, the DNA wraps around the other UvrB subunit that will check the other stand for damage. This is UvrABC system protein B from Enterobacter sp. (strain 638).